We begin with the raw amino-acid sequence, 88 residues long: Small ribosomal subunit protein uS15 (88 aa).

The protein belongs to the universal ribosomal protein uS15 family. In terms of assembly, part of the 30S ribosomal subunit. Forms a bridge to the 50S subunit in the 70S ribosome, contacting the 23S rRNA.

Its function is as follows. One of the primary rRNA binding proteins, it binds directly to 16S rRNA where it helps nucleate assembly of the platform of the 30S subunit by binding and bridging several RNA helices of the 16S rRNA. Functionally, forms an intersubunit bridge (bridge B4) with the 23S rRNA of the 50S subunit in the ribosome. This Mycoplasmopsis pulmonis (strain UAB CTIP) (Mycoplasma pulmonis) protein is Small ribosomal subunit protein uS15.